A 227-amino-acid polypeptide reads, in one-letter code: PKHD-type hydroxylase Bphy_5374 (227 aa).

The Fe2OG dioxygenase domain maps to 79-179 (KVYPPLFNRY…RVASFFWVQS (101 aa)). Positions 97, 99, and 160 each coordinate Fe cation. Arginine 170 serves as a coordination point for 2-oxoglutarate.

Fe(2+) is required as a cofactor. L-ascorbate serves as cofactor.

The chain is PKHD-type hydroxylase Bphy_5374 from Paraburkholderia phymatum (strain DSM 17167 / CIP 108236 / LMG 21445 / STM815) (Burkholderia phymatum).